The sequence spans 847 residues: DNA gyrase subunit A (847 aa).

A Topo IIA-type catalytic domain is found at 34–533; it reads LPDVRDGLKP…NYSDINTSDL (500 aa). Y122 functions as the O-(5'-phospho-DNA)-tyrosine intermediate in the catalytic mechanism. The short motif at 560–566 is the GyrA-box element; sequence QKRGGKG.

The protein belongs to the type II topoisomerase GyrA/ParC subunit family. In terms of assembly, heterotetramer, composed of two GyrA and two GyrB chains. In the heterotetramer, GyrA contains the active site tyrosine that forms a transient covalent intermediate with DNA, while GyrB binds cofactors and catalyzes ATP hydrolysis.

The protein resides in the cytoplasm. The catalysed reaction is ATP-dependent breakage, passage and rejoining of double-stranded DNA.. Functionally, a type II topoisomerase that negatively supercoils closed circular double-stranded (ds) DNA in an ATP-dependent manner to modulate DNA topology and maintain chromosomes in an underwound state. Negative supercoiling favors strand separation, and DNA replication, transcription, recombination and repair, all of which involve strand separation. Also able to catalyze the interconversion of other topological isomers of dsDNA rings, including catenanes and knotted rings. Type II topoisomerases break and join 2 DNA strands simultaneously in an ATP-dependent manner. The polypeptide is DNA gyrase subunit A (Buchnera aphidicola subsp. Baizongia pistaciae (strain Bp)).